Reading from the N-terminus, the 743-residue chain is Polyribonucleotide nucleotidyltransferase (743 aa).

Positions 494 and 500 each coordinate Mg(2+). In terms of domain architecture, KH spans 561–620; that stretch reads PQHAEVFVNPDIIRLIIGPGGKNIKAITAATGASVDIEDSGRVSIFAPTAEALEKAREMV. The S1 motif domain maps to 630-704; sequence GKNYNAKVRK…SRKAVLLEEQ (75 aa). The interval 702 to 743 is disordered; sequence EEQGHPWNPEDTARPQRSDRGDRGDRRGDRGGRDRRDRGDRR. The span at 712–743 shows a compositional bias: basic and acidic residues; sequence DTARPQRSDRGDRGDRRGDRGGRDRRDRGDRR.

The protein belongs to the polyribonucleotide nucleotidyltransferase family. Requires Mg(2+) as cofactor.

The protein resides in the cytoplasm. The enzyme catalyses RNA(n+1) + phosphate = RNA(n) + a ribonucleoside 5'-diphosphate. Functionally, involved in mRNA degradation. Catalyzes the phosphorolysis of single-stranded polyribonucleotides processively in the 3'- to 5'-direction. In Desulfovibrio desulfuricans (strain ATCC 27774 / DSM 6949 / MB), this protein is Polyribonucleotide nucleotidyltransferase.